The following is a 362-amino-acid chain: F-box protein At1g54550 (362 aa).

In terms of domain architecture, F-box spans 1–47 (MATVTDLPDDLVREIFSRVPLTSLRAVRSTCKKWNAISKYDILGKKA).

The sequence is that of F-box protein At1g54550 from Arabidopsis thaliana (Mouse-ear cress).